The following is a 309-amino-acid chain: 4-hydroxy-3-methylbut-2-enyl diphosphate reductase (309 aa).

Cys-12 contributes to the [4Fe-4S] cluster binding site. The (2E)-4-hydroxy-3-methylbut-2-enyl diphosphate site is built by His-43 and His-77. Dimethylallyl diphosphate-binding residues include His-43 and His-77. Positions 43 and 77 each coordinate isopentenyl diphosphate. Cys-99 is a binding site for [4Fe-4S] cluster. A (2E)-4-hydroxy-3-methylbut-2-enyl diphosphate-binding site is contributed by His-127. Position 127 (His-127) interacts with dimethylallyl diphosphate. His-127 is an isopentenyl diphosphate binding site. Glu-129 serves as the catalytic Proton donor. Position 167 (Thr-167) interacts with (2E)-4-hydroxy-3-methylbut-2-enyl diphosphate. Cys-197 serves as a coordination point for [4Fe-4S] cluster. Ser-225, Ser-226, Asn-227, and Ser-269 together coordinate (2E)-4-hydroxy-3-methylbut-2-enyl diphosphate. Dimethylallyl diphosphate is bound by residues Ser-225, Ser-226, Asn-227, and Ser-269. Isopentenyl diphosphate is bound by residues Ser-225, Ser-226, Asn-227, and Ser-269.

This sequence belongs to the IspH family. [4Fe-4S] cluster serves as cofactor.

The enzyme catalyses isopentenyl diphosphate + 2 oxidized [2Fe-2S]-[ferredoxin] + H2O = (2E)-4-hydroxy-3-methylbut-2-enyl diphosphate + 2 reduced [2Fe-2S]-[ferredoxin] + 2 H(+). It carries out the reaction dimethylallyl diphosphate + 2 oxidized [2Fe-2S]-[ferredoxin] + H2O = (2E)-4-hydroxy-3-methylbut-2-enyl diphosphate + 2 reduced [2Fe-2S]-[ferredoxin] + 2 H(+). It functions in the pathway isoprenoid biosynthesis; dimethylallyl diphosphate biosynthesis; dimethylallyl diphosphate from (2E)-4-hydroxy-3-methylbutenyl diphosphate: step 1/1. Its pathway is isoprenoid biosynthesis; isopentenyl diphosphate biosynthesis via DXP pathway; isopentenyl diphosphate from 1-deoxy-D-xylulose 5-phosphate: step 6/6. Its function is as follows. Catalyzes the conversion of 1-hydroxy-2-methyl-2-(E)-butenyl 4-diphosphate (HMBPP) into a mixture of isopentenyl diphosphate (IPP) and dimethylallyl diphosphate (DMAPP). Acts in the terminal step of the DOXP/MEP pathway for isoprenoid precursor biosynthesis. The sequence is that of 4-hydroxy-3-methylbut-2-enyl diphosphate reductase from Wolbachia sp. subsp. Brugia malayi (strain TRS).